A 173-amino-acid polypeptide reads, in one-letter code: 3-hydroxydecanoyl-[acyl-carrier-protein] dehydratase (173 aa).

Residue histidine 71 is part of the active site.

Belongs to the thioester dehydratase family. FabA subfamily. Homodimer.

The protein resides in the cytoplasm. The enzyme catalyses a (3R)-hydroxyacyl-[ACP] = a (2E)-enoyl-[ACP] + H2O. It catalyses the reaction (3R)-hydroxydecanoyl-[ACP] = (2E)-decenoyl-[ACP] + H2O. It carries out the reaction (2E)-decenoyl-[ACP] = (3Z)-decenoyl-[ACP]. It participates in lipid metabolism; fatty acid biosynthesis. Its function is as follows. Necessary for the introduction of cis unsaturation into fatty acids. Catalyzes the dehydration of (3R)-3-hydroxydecanoyl-ACP to E-(2)-decenoyl-ACP and then its isomerization to Z-(3)-decenoyl-ACP. Can catalyze the dehydratase reaction for beta-hydroxyacyl-ACPs with saturated chain lengths up to 16:0, being most active on intermediate chain length. The chain is 3-hydroxydecanoyl-[acyl-carrier-protein] dehydratase from Bradyrhizobium diazoefficiens (strain JCM 10833 / BCRC 13528 / IAM 13628 / NBRC 14792 / USDA 110).